The following is a 263-amino-acid chain: Glycerol uptake facilitator protein (263 aa).

Topologically, residues 1-7 (MNIYRKK) are cytoplasmic. Residues 8 to 36 (NIIKKCFMEFFGTGLVMFFGIGCLAASKL) form a helical membrane-spanning segment. Topologically, residues 37-41 (TNANF) are extracellular. A helical membrane pass occupies residues 42–62 (TQFEISCIWGFGVSIAIYFSS). At 63 to 65 (SIS) the chain is on the cytoplasmic side. The stretch at 66-69 (GAHL) is an intramembrane region. Positions 70–72 (NPA) match the NPA 1 motif. Residues 70–80 (NPAVTIFFWLS) constitute an intramembrane region (helical). Topologically, residues 81-86 (SKLNKR) are cytoplasmic. A helical transmembrane segment spans residues 87-110 (KVLPYIISQTLGSFFFTMLTYYLY). Residues 111–145 (NNLLISFERNNNVVRGTQESLNLASIFCVYPNYNN) are Extracellular-facing. A helical membrane pass occupies residues 146-171 (SFIYDFIIEIFSTALFILIVLEFNNR). Over 172 to 181 (NSNYFLYNRS) the chain is Cytoplasmic. The helical transmembrane segment at 182–198 (VAPILTGFLVCMINLVI) threads the bilayer. The Extracellular segment spans residues 199–202 (NPLN). The stretch at 203 to 206 (NISL) is an intramembrane region. Residues 207 to 209 (NPA) carry the NPA 2 motif. Positions 207-220 (NPARDLGPKILLSL) form an intramembrane region, helical. The Extracellular portion of the chain corresponds to 221-236 (TGWGLFSFTGGNDNIL). Residues 237–259 (YCFIPIMGPILGANLGGWIHKTL) form a helical membrane-spanning segment. Residues 260-263 (INNS) lie on the Cytoplasmic side of the membrane.

Belongs to the MIP/aquaporin (TC 1.A.8) family.

It is found in the cell membrane. The enzyme catalyses glycerol(in) = glycerol(out). In terms of biological role, mediates glycerol diffusion across the cytoplasmic membrane via a pore-type mechanism. This is Glycerol uptake facilitator protein (glpF) from Buchnera aphidicola subsp. Acyrthosiphon pisum (strain APS) (Acyrthosiphon pisum symbiotic bacterium).